A 576-amino-acid chain; its full sequence is CTP synthase (576 aa).

One can recognise a Glutamine amidotransferase type-1 domain in the interval 305 to 559 (QIALVGKYTH…LGLVAAAANI (255 aa)). Residues C404, H535, and E537 each act as for GATase activity in the active site.

This sequence belongs to the CTP synthase family.

The enzyme catalyses UTP + L-glutamine + ATP + H2O = CTP + L-glutamate + ADP + phosphate + 2 H(+). The protein operates within pyrimidine metabolism; CTP biosynthesis via de novo pathway; CTP from UDP: step 2/2. In terms of biological role, catalyzes the ATP-dependent amination of UTP to CTP with either L-glutamine or ammonia as the source of nitrogen. The polypeptide is CTP synthase (URA7) (Eremothecium gossypii (strain ATCC 10895 / CBS 109.51 / FGSC 9923 / NRRL Y-1056) (Yeast)).